The sequence spans 388 residues: 4-hydroxy-3-methylbut-2-en-1-yl diphosphate synthase (flavodoxin) (388 aa).

[4Fe-4S] cluster is bound by residues Cys281, Cys284, Cys316, and Glu323.

This sequence belongs to the IspG family. It depends on [4Fe-4S] cluster as a cofactor.

It carries out the reaction (2E)-4-hydroxy-3-methylbut-2-enyl diphosphate + oxidized [flavodoxin] + H2O + 2 H(+) = 2-C-methyl-D-erythritol 2,4-cyclic diphosphate + reduced [flavodoxin]. Its pathway is isoprenoid biosynthesis; isopentenyl diphosphate biosynthesis via DXP pathway; isopentenyl diphosphate from 1-deoxy-D-xylulose 5-phosphate: step 5/6. Converts 2C-methyl-D-erythritol 2,4-cyclodiphosphate (ME-2,4cPP) into 1-hydroxy-2-methyl-2-(E)-butenyl 4-diphosphate. This is 4-hydroxy-3-methylbut-2-en-1-yl diphosphate synthase (flavodoxin) from Pseudarthrobacter chlorophenolicus (strain ATCC 700700 / DSM 12829 / CIP 107037 / JCM 12360 / KCTC 9906 / NCIMB 13794 / A6) (Arthrobacter chlorophenolicus).